A 301-amino-acid polypeptide reads, in one-letter code: Probable alpha-L-glutamate ligase (301 aa).

Positions 104-287 constitute an ATP-grasp domain; sequence LQLLSRRGIG…VAGMIIEHLE (184 aa). ATP-binding positions include lysine 141, 178–179, aspartate 187, and 211–213; these read EY and RSN. Mg(2+) is bound by residues aspartate 248, glutamate 260, and asparagine 262. Mn(2+) is bound by residues aspartate 248, glutamate 260, and asparagine 262.

Belongs to the RimK family. The cofactor is Mg(2+). Mn(2+) serves as cofactor.

The chain is Probable alpha-L-glutamate ligase from Pseudomonas putida (strain W619).